A 155-amino-acid chain; its full sequence is Small ribosomal subunit protein uS7c (155 aa).

The protein belongs to the universal ribosomal protein uS7 family. As to quaternary structure, part of the 30S ribosomal subunit.

The protein localises to the plastid. It is found in the chloroplast. In terms of biological role, one of the primary rRNA binding proteins, it binds directly to 16S rRNA where it nucleates assembly of the head domain of the 30S subunit. The protein is Small ribosomal subunit protein uS7c (rps7) of Saruma henryi (Upright wild ginger).